We begin with the raw amino-acid sequence, 156 residues long: Small ribosomal subunit protein uS7 (156 aa).

This sequence belongs to the universal ribosomal protein uS7 family. In terms of assembly, part of the 30S ribosomal subunit. Contacts proteins S9 and S11.

Its function is as follows. One of the primary rRNA binding proteins, it binds directly to 16S rRNA where it nucleates assembly of the head domain of the 30S subunit. Is located at the subunit interface close to the decoding center, probably blocks exit of the E-site tRNA. This Mycoplasmopsis synoviae (strain 53) (Mycoplasma synoviae) protein is Small ribosomal subunit protein uS7.